Consider the following 229-residue polypeptide: Lipoprotein-releasing system ATP-binding protein LolD (229 aa).

An ABC transporter domain is found at 6–226 (LELKSVDRHY…TLSDGRVVEL (221 aa)). An ATP-binding site is contributed by 42–49 (APSGTGKS).

This sequence belongs to the ABC transporter superfamily. Lipoprotein translocase (TC 3.A.1.125) family. In terms of assembly, the complex is composed of two ATP-binding proteins (LolD) and two transmembrane proteins (LolC and LolE).

Its subcellular location is the cell inner membrane. Functionally, part of the ABC transporter complex LolCDE involved in the translocation of mature outer membrane-directed lipoproteins, from the inner membrane to the periplasmic chaperone, LolA. Responsible for the formation of the LolA-lipoprotein complex in an ATP-dependent manner. This Chelativorans sp. (strain BNC1) protein is Lipoprotein-releasing system ATP-binding protein LolD.